Reading from the N-terminus, the 876-residue chain is Alanine--tRNA ligase (876 aa).

Positions 568, 572, 670, and 674 each coordinate Zn(2+).

This sequence belongs to the class-II aminoacyl-tRNA synthetase family. Requires Zn(2+) as cofactor.

It localises to the cytoplasm. The enzyme catalyses tRNA(Ala) + L-alanine + ATP = L-alanyl-tRNA(Ala) + AMP + diphosphate. In terms of biological role, catalyzes the attachment of alanine to tRNA(Ala) in a two-step reaction: alanine is first activated by ATP to form Ala-AMP and then transferred to the acceptor end of tRNA(Ala). Also edits incorrectly charged Ser-tRNA(Ala) and Gly-tRNA(Ala) via its editing domain. This chain is Alanine--tRNA ligase, found in Geobacter metallireducens (strain ATCC 53774 / DSM 7210 / GS-15).